A 401-amino-acid chain; its full sequence is Phosphoglycerate kinase (401 aa).

Substrate is bound by residues 26–28 (DLN), R41, 64–67 (HLGR), R123, and R156. ATP contacts are provided by residues K207, G298, E329, and 355–358 (GGDS).

Belongs to the phosphoglycerate kinase family. As to quaternary structure, monomer.

It is found in the cytoplasm. It carries out the reaction (2R)-3-phosphoglycerate + ATP = (2R)-3-phospho-glyceroyl phosphate + ADP. The protein operates within carbohydrate degradation; glycolysis; pyruvate from D-glyceraldehyde 3-phosphate: step 2/5. The sequence is that of Phosphoglycerate kinase from Bdellovibrio bacteriovorus (strain ATCC 15356 / DSM 50701 / NCIMB 9529 / HD100).